Reading from the N-terminus, the 150-residue chain is MKVLLTKEVKGLGKAGEIHEVKDGYGRNFLVGKGMAEIATNEVINRWKAEQKRRAEKEAQELERLKNVAKELASVTLKIVQKVGANGSLYGAITKEDLSAALMAQKGIEVDKKSFELKTPIKSTGIYEIEVKLGHGIHAELKIDVEGSNV.

It belongs to the bacterial ribosomal protein bL9 family.

In terms of biological role, binds to the 23S rRNA. In Wolinella succinogenes (strain ATCC 29543 / DSM 1740 / CCUG 13145 / JCM 31913 / LMG 7466 / NCTC 11488 / FDC 602W) (Vibrio succinogenes), this protein is Large ribosomal subunit protein bL9.